The primary structure comprises 296 residues: Vacuolar histidine transporter YPQ3 (296 aa).

At 1–12 the chain is on the vacuolar side; sequence MKLIPIILNAKN. A PQ-loop 1 domain is found at 10–76; sequence AKNLSGMAGS…QNLLPTMIIL (67 aa). A helical membrane pass occupies residues 13 to 33; sequence LSGMAGSISICCWIVVFVPQI. At 34 to 44 the chain is on the cytoplasmic side; that stretch reads YENFRRQSAEG. Residues 45 to 65 form a helical membrane-spanning segment; it reads LSLLFIVLWLLGDIFNVMGAM. The Vacuolar segment spans residues 66–68; sequence MQN. A helical transmembrane segment spans residues 69–89; that stretch reads LLPTMIILAAYYTLADLILLI. At 90–163 the chain is on the cytoplasmic side; the sequence is QCMWYDKEKK…RTIVVKEREN (74 aa). The chain crosses the membrane as a helical span at residues 164–184; the sequence is FFNDFLIVSGVLIAGILSWYI. Residues 185–199 are Vacuolar-facing; that stretch reads SYCSGLDNGIPKKKP. A helical membrane pass occupies residues 200–220; it reads AFEQINLPAQILGYLSAILYL. The PQ-loop 2 domain maps to 208–270; it reads AQILGYLSAI…ASWLIGSAGT (63 aa). Topologically, residues 221–238 are cytoplasmic; that stretch reads GSRIPQIVLNFKRKSCEG. The helical transmembrane segment at 239–259 threads the bilayer; that stretch reads VSFLFFLFACLGNTSFIISVL. Residues 260 to 262 lie on the Vacuolar side of the membrane; the sequence is SAS. The helical transmembrane segment at 263–283 threads the bilayer; it reads WLIGSAGTLLMDFTVFIQFFL. Residues 284-296 lie on the Cytoplasmic side of the membrane; sequence YAKPKYEKILIDN.

This sequence belongs to the laat-1 family.

The protein resides in the vacuole membrane. Its subcellular location is the mitochondrion membrane. Functionally, amino acid transporter that moves histidine into the vacuole. May also contribute to low affinity arginine import into the vacuole. May function as an amino acid/proton antiporter. The chain is Vacuolar histidine transporter YPQ3 from Saccharomyces cerevisiae (strain ATCC 204508 / S288c) (Baker's yeast).